The following is a 196-amino-acid chain: uncharacterized protein (196 aa).

The region spanning 58-163 (HKFFDAIKDS…IILPNNYHKN (106 aa)) is the Bro-N domain.

This is an uncharacterized protein from Acanthamoeba polyphaga mimivirus (APMV).